The chain runs to 245 residues: MPNYSYNPTIGRTYVYDNKYYKNLGGLIKNAKRKKHLIEHEKEEKQWDLLDNYMVAEDPFLGPGKNQKLTLFKEVRNVKPDTMKLIVNWSGKEFLRETWTRFVEDSFPIVNDQEVMDVYLVANLKPTRPNRCYKFLAQHALRWDEDYVPHEVIRIMEPSYVGMNNEYRISLAKKGGGCPIMNIHSEYTNSFESFVNRVIWENFYKPIVYIGTDSAEEEEILIEVSLVFKIKEFAPDAPLFTGPAY.

The protein belongs to the polyhedrin family.

In terms of biological role, major component of the virus occlusion bodies, which are large proteinaceous structures (polyhedra), that protect the virus from the outside environment for extended periods until they are ingested by insect larvae. The polypeptide is Polyhedrin (PH) (Bombyx mori nuclear polyhedrosis virus (BmNPV)).